Reading from the N-terminus, the 1042-residue chain is Protein phosphatase Slingshot homolog 1 (1042 aa).

Polar residues predominate over residues 1–12 (MALVTLQRSPTP). The disordered stretch occupies residues 1–29 (MALVTLQRSPTPSAASSSASNSELEAGSD). Ala-2 bears the N-acetylalanine mark. A compositionally biased stretch (low complexity) spans 13–22 (SAASSSASNS). 2 positions are modified to phosphoserine: Ser-37 and Ser-57. The DEK-C domain occupies 249–304 (ERTERLIKAKLRSIMMSQDLENVTSKEIRNELEKQMNCNLKEFKEFIDNEMLLILG). Positions 308–449 (KPSLIFDHLY…LSEYEGILDA (142 aa)) constitute a Tyrosine-protein phosphatase domain. The active-site Phosphocysteine intermediate is the Cys-393. Position 516 is a phosphoserine (Ser-516). Disordered stretches follow at residues 576 to 609 (FGNS…ASTQ), 668 to 766 (MERH…PHCD), 858 to 900 (IPEE…LDHT), and 915 to 942 (PTSS…KPGL). A compositionally biased stretch (polar residues) spans 675-693 (SSSAICTQPTFLPHVTSSP). Over residues 697 to 712 (ASSRSRAPERPASGPA) the composition is skewed to low complexity. Residues 886 to 900 (LQKSPTSTLPRLDHT) are compositionally biased toward polar residues. Ser-889 is subject to Phosphoserine. Residues 889-1042 (SPTSTLPRLD…LKSPSRVNKS (154 aa)) are interaction with YWHAG. A compositionally biased stretch (low complexity) spans 917–935 (SSSISSNLTRSSSSDSIHS). The residue at position 970 (Ser-970) is a Phosphoserine. Positions 985-995 (SSEADTSTIAD) are enriched in polar residues. Positions 985 to 1042 (SSEADTSTIADSQDAKCGLSSSFLPEPQSAPRDPAATSKSSGKSAPEHLKSPSRVNKS) are disordered.

The protein belongs to the protein-tyrosine phosphatase family. As to quaternary structure, interacts with the 14-3-3 proteins YWHAB, YWHAG, YWHAQ, and YWHAZ. Interaction with 14-3-3 proteins inhibits phosphatase activity and also blocks recruitment to lamellipodia and stimulation by actin. Interacts with actin and this stimulates phosphatase activity. Interacts with LIMK1. Phosphorylated. Inhibitory phosphorylation by PAK4 promotes binding to YWHAZ. Phosphorylation at Ser-970 is decreased by stimuli which promote actin reorganization and lamellipodia formation. Can be dephosphorylated and activated by PPP3CA/calcineurin A. Phosphorylation decreases immediately prior to telophase. As to expression, expressed in brain, heart, kidney and thymus. Also expressed at lower levels in liver, skeletal muscle, small intestine and spleen.

Its subcellular location is the cytoplasm. It is found in the cytoskeleton. It localises to the cleavage furrow. The protein localises to the midbody. It carries out the reaction O-phospho-L-tyrosyl-[protein] + H2O = L-tyrosyl-[protein] + phosphate. The enzyme catalyses O-phospho-L-seryl-[protein] + H2O = L-seryl-[protein] + phosphate. It catalyses the reaction O-phospho-L-threonyl-[protein] + H2O = L-threonyl-[protein] + phosphate. In terms of biological role, protein phosphatase which regulates actin filament dynamics. Dephosphorylates and activates the actin binding/depolymerizing factor cofilin, which subsequently binds to actin filaments and stimulates their disassembly. Inhibitory phosphorylation of cofilin is mediated by LIMK1, which may also be dephosphorylated and inactivated by this protein. The sequence is that of Protein phosphatase Slingshot homolog 1 from Mus musculus (Mouse).